A 65-amino-acid chain; its full sequence is Lantipeptide Flvbeta.h (65 aa).

A propeptide spans 1-27 (MERYGHLAGVIPVDEIDDMFESNVIGG) (cleaved by FlvT). A 2,3-didehydrobutyrine; by FlvM2 modification is found at Thr-28. Positions 29 to 33 (SSIDC) form a cross-link, lanthionine (Ser-Cys); by FlvM2. Ser-30 is modified (2,3-didehydroalanine (Ser); by FlvM2). Thr-44 bears the 2,3-didehydrobutyrine; by FlvM2 mark. A cross-link (beta-methyllanthionine (Thr-Cys); by FlvM2) is located at residues 48–54 (TVRIEFC). A cross-link (lanthionine (Ser-Cys); by FlvM2) is located at residues 56-59 (SAAC). Residues 60-63 (TYSC) constitute a cross-link (beta-methyllanthionine (Thr-Cys); by FlvM2).

Contains LL-lanthionine, DL-lanthionine, and DL-beta-methyllanthionine, when coepressed in E.coli with the flavecin synthetase FlvM2.

It localises to the secreted. In terms of biological role, lanthionine-containing peptide that does probably not show antibacterial activity, since its analog [+2]Flvbeta.h does not show antibacterial activity against M.luteus. Also does not show antibiotic activity when tested with [Del2]Flvalpha.a, an analog of Flvalpha.a, which is encoded by the same operon than Flvbeta.h. The bactericidal activity of lantibiotics is based on depolarization of energized bacterial cytoplasmic membranes, initiated by the formation of aqueous transmembrane pores. This is Lantipeptide Flvbeta.h from Ruminococcus flavefaciens.